Reading from the N-terminus, the 408-residue chain is Acetylornithine aminotransferase (408 aa).

Pyridoxal 5'-phosphate-binding positions include 107–108 and Phe-141; that span reads GT. Arg-144 lines the N(2)-acetyl-L-ornithine pocket. 227–230 lines the pyridoxal 5'-phosphate pocket; the sequence is DEIQ. Position 256 is an N6-(pyridoxal phosphate)lysine (Lys-256). Thr-284 provides a ligand contact to N(2)-acetyl-L-ornithine. Thr-285 is a pyridoxal 5'-phosphate binding site.

The protein belongs to the class-III pyridoxal-phosphate-dependent aminotransferase family. ArgD subfamily. In terms of assembly, homodimer. It depends on pyridoxal 5'-phosphate as a cofactor.

The protein localises to the cytoplasm. It carries out the reaction N(2)-acetyl-L-ornithine + 2-oxoglutarate = N-acetyl-L-glutamate 5-semialdehyde + L-glutamate. Its pathway is amino-acid biosynthesis; L-arginine biosynthesis; N(2)-acetyl-L-ornithine from L-glutamate: step 4/4. This is Acetylornithine aminotransferase from Xanthomonas campestris pv. campestris (strain ATCC 33913 / DSM 3586 / NCPPB 528 / LMG 568 / P 25).